A 448-amino-acid polypeptide reads, in one-letter code: tRNA(Ile)-lysidine synthase (448 aa).

Ser29–Ser34 contacts ATP.

Belongs to the tRNA(Ile)-lysidine synthase family.

Its subcellular location is the cytoplasm. It carries out the reaction cytidine(34) in tRNA(Ile2) + L-lysine + ATP = lysidine(34) in tRNA(Ile2) + AMP + diphosphate + H(+). Ligates lysine onto the cytidine present at position 34 of the AUA codon-specific tRNA(Ile) that contains the anticodon CAU, in an ATP-dependent manner. Cytidine is converted to lysidine, thus changing the amino acid specificity of the tRNA from methionine to isoleucine. The sequence is that of tRNA(Ile)-lysidine synthase from Azoarcus sp. (strain BH72).